A 319-amino-acid chain; its full sequence is Inositol-tetrakisphosphate 1-kinase (319 aa).

Lys17 and Lys57 together coordinate 1D-myo-inositol 1,3,4,6-tetrakisphosphate. Lys17 provides a ligand contact to 1D-myo-inositol 1,3,4-trisphosphate. 2 residues coordinate ADP: Arg94 and Lys136. ATP contacts are provided by Arg94 and Lys136. Residues 98–317 enclose the ATP-grasp domain; sequence NALLIKNNIP…KVALCYTEVA (220 aa). Residues Gln141, Gly142, and His147 each coordinate 1D-myo-inositol 1,3,4,6-tetrakisphosphate. 3 residues coordinate 1D-myo-inositol 1,3,4-trisphosphate: Gln141, Gly142, and His147. 5 residues coordinate ADP: His147, Gln168, His169, Tyr170, and Ile171. 5 residues coordinate ATP: His147, Gln168, His169, Tyr170, and Ile171. Lys179 lines the 1D-myo-inositol 1,3,4,6-tetrakisphosphate pocket. Residues Ser194 and Asn210 each coordinate ADP. Ser194 serves as a coordination point for ATP. Asp275 serves as a coordination point for Mg(2+). Residues Val288 and Asp289 each coordinate ADP. Residues Val288, Asp289, and Asn291 each coordinate ATP. Asp289, Asn291, and Ser295 together coordinate 1D-myo-inositol 1,3,4,6-tetrakisphosphate. 2 residues coordinate Mg(2+): Asp289 and Asn291. 1D-myo-inositol 1,3,4-trisphosphate is bound by residues Asn291 and Ser295.

The protein belongs to the ITPK1 family. As to quaternary structure, monomer. Requires Mg(2+) as cofactor.

The catalysed reaction is 1D-myo-inositol 3,4,5,6-tetrakisphosphate + ATP = 1D-myo-inositol 1,3,4,5,6-pentakisphosphate + ADP + H(+). The enzyme catalyses 1D-myo-inositol 1,3,4-trisphosphate + ATP = 1D-myo-inositol 1,3,4,5-tetrakisphosphate + ADP + H(+). It catalyses the reaction 1D-myo-inositol 1,3,4-trisphosphate + ATP = 1D-myo-inositol 1,3,4,6-tetrakisphosphate + ADP + H(+). Functionally, kinase that can phosphorylate various inositol polyphosphate such as Ins(3,4,5,6)P4 or Ins(1,3,4)P3. Phosphorylates Ins(3,4,5,6)P4 at position 1 to form Ins(1,3,4,5,6)P5. This reaction is thought to have regulatory importance, since Ins(3,4,5,6)P4 is an inhibitor of plasma membrane Ca(2+)-activated Cl(-) channels, while Ins(1,3,4,5,6)P5 is not. Also phosphorylates Ins(1,3,4)P3 on O-5 and O-6 to form Ins(1,3,4,6)P4, an essential molecule in the hexakisphosphate (InsP6) pathway. May also act as an isomerase that interconverts the inositol tetrakisphosphate isomers Ins(1,3,4,5)P4 and Ins(1,3,4,6)P4 in the presence of ADP and magnesium. In Entamoeba histolytica (strain ATCC 30459 / HM-1:IMSS / ABRM), this protein is Inositol-tetrakisphosphate 1-kinase (ITPK1).